The chain runs to 444 residues: Transcription activator AFTR-2 (444 aa).

Residues 16–43 (CDFCTQSKLRCNKNKPSCRRCTLQQQPC) constitute a DNA-binding region (zn(2)-C6 fungal-type). Positions 49–88 (RRTGRPPKHPRKANDCQEANGQHGDQDPVTSTPGGSYQQQ) are disordered. Residues 50–59 (RTGRPPKHPR) are compositionally biased toward basic residues. A compositionally biased stretch (polar residues) spans 76 to 88 (PVTSTPGGSYQQQ).

It localises to the nucleus. Transcription factor that regulates the expression of the gene clusters that mediate the biosynthesis of the host-selective toxins (HSTs) AF-toxins responsible for Alternaria black spot of strawberry disease by the strawberry pathotype. On cellular level, AF-toxins affect plasma membrane of susceptible cells and cause a sudden increase in loss of K(+) after a few minutes of toxin treatment. This Alternaria alternata (Alternaria rot fungus) protein is Transcription activator AFTR-2.